We begin with the raw amino-acid sequence, 354 residues long: Probable L-ascorbate-6-phosphate lactonase UlaG (354 aa).

Belongs to the UlaG family. A divalent metal cation serves as cofactor.

Its subcellular location is the cytoplasm. The enzyme catalyses L-ascorbate 6-phosphate + H2O = 3-dehydro-L-gulonate 6-phosphate. It participates in cofactor degradation; L-ascorbate degradation; D-xylulose 5-phosphate from L-ascorbate: step 1/4. In terms of biological role, probably catalyzes the hydrolysis of L-ascorbate-6-P into 3-keto-L-gulonate-6-P. Is essential for L-ascorbate utilization under anaerobic conditions. The sequence is that of Probable L-ascorbate-6-phosphate lactonase UlaG from Shigella dysenteriae serotype 1 (strain Sd197).